Reading from the N-terminus, the 226-residue chain is Ribonuclease 3 (226 aa).

The RNase III domain occupies isoleucine 6–aspartate 128. Glutamate 41 serves as a coordination point for Mg(2+). Aspartate 45 is an active-site residue. Residues aspartate 114 and glutamate 117 each contribute to the Mg(2+) site. The active site involves glutamate 117. The DRBM domain maps to aspartate 155–leucine 225.

It belongs to the ribonuclease III family. In terms of assembly, homodimer. Requires Mg(2+) as cofactor.

It localises to the cytoplasm. The enzyme catalyses Endonucleolytic cleavage to 5'-phosphomonoester.. Its function is as follows. Digests double-stranded RNA. Involved in the processing of primary rRNA transcript to yield the immediate precursors to the large and small rRNAs (23S and 16S). Processes some mRNAs, and tRNAs when they are encoded in the rRNA operon. Processes pre-crRNA and tracrRNA of type II CRISPR loci if present in the organism. The polypeptide is Ribonuclease 3 (Yersinia enterocolitica serotype O:8 / biotype 1B (strain NCTC 13174 / 8081)).